Reading from the N-terminus, the 1367-residue chain is Protein patched homolog 3 (1367 aa).

At 1 to 97 (MSFPDEETDL…WLFRIGCFVQ (97 aa)) the chain is on the cytoplasmic side. A helical membrane pass occupies residues 98–118 (RWAWSTIFISLFLYCLCLGGL). At 119 to 625 (RHVTIETDLV…IADMLEEFSQ (507 aa)) the chain is on the extracellular side. N-linked (GlcNAc...) asparagine glycosylation is found at Asn235, Asn310, Asn454, and Asn591. The helical transmembrane segment at 626-646 (FNYIIIVIGYILMVIYAAFTQ) threads the bilayer. The 162-residue stretch at 627-788 (NYIIIVIGYI…MFIFPAMIGI (162 aa)) folds into the SSD domain. The Cytoplasmic segment spans residues 647-659 (GRFQGWWLAVQSN). A helical transmembrane segment spans residues 660–680 (VALAICGVILVTISSICGLGF). Residues 681-694 (ATHLGINFNAATTQ) lie on the Extracellular side of the membrane. The helical transmembrane segment at 695–715 (VVPFLSLGLGIDDMFLLLHNY) threads the bilayer. The Cytoplasmic portion of the chain corresponds to 716–737 (DEIINICNKNEIGVLLKETGMS). Residues 738–758 (VMLTSINNILAFISGYVLPIP) form a helical membrane-spanning segment. Topologically, residues 759-767 (ALRSFCSQT) are extracellular. A helical transmembrane segment spans residues 768-788 (AILLAFNLIFLMFIFPAMIGI). At 789-863 (DLRRQRKGKR…KIYIPALKNN (75 aa)) the chain is on the cytoplasmic side. The helical transmembrane segment at 864-884 (VVKACVLIGTTTAVVFGLYGM) threads the bilayer. Residues 885–1143 (YTSTLGLELA…WEQYLTLRWN (259 aa)) lie on the Extracellular side of the membrane. Residues 1144–1164 (LFQAICIIALAVFCVISILMF) traverse the membrane as a helical segment. At 1165-1171 (NPWAATL) the chain is on the cytoplasmic side. The helical transmembrane segment at 1172–1192 (IMCIVVITTIELGGFMGLMGI) threads the bilayer. Residues 1193 to 1199 (KMNPISA) lie on the Extracellular side of the membrane. The helical transmembrane segment at 1200-1220 (VTLICAVGIGVEFTAHVELAF) threads the bilayer. Topologically, residues 1221-1237 (LTALGTIDQRLESCLQH) are cytoplasmic. Residues 1238–1258 (MFVPVYHGAISTFLGVVMLVF) form a helical membrane-spanning segment. The Extracellular segment spans residues 1259 to 1273 (SEFDFVVTYFFYTMT). The chain crosses the membrane as a helical span at residues 1274 to 1294 (LLVALGVFNGLCVLPVILTLV). At 1295–1367 (GPKPELTPTD…SDDESSPAHK (73 aa)) the chain is on the cytoplasmic side. The tract at residues 1302–1367 (PTDGSSVLPP…SDDESSPAHK (66 aa)) is disordered. Low complexity predominate over residues 1346-1356 (RDSPSTSSASH).

Belongs to the patched family. In terms of tissue distribution, in males, expressed in the precursor and mature sensory rays, the cloaca, and pre-anal ganglia and cephalic neurons. Also expressed in five cells in the valve region between the seminal vesicle and vas deferens of the somatic gonad.

Its subcellular location is the apical cell membrane. It localises to the cell junction. The protein resides in the adherens junction. Its function is as follows. Regulates osmosis during embryonic development. Required for larval development and in particular is involved in larval molting. This Caenorhabditis elegans protein is Protein patched homolog 3.